The sequence spans 270 residues: Outer membrane protein P.IIC (270 aa).

The first 25 residues, 1–25 (MQPAKNLLFSSLLFSSLLFSSAARA), serve as a signal peptide directing secretion. Residues 26-35 (ASEDGGRGPY) lie on the Extracellular side of the membrane. A beta stranded membrane pass occupies residues 36 to 44 (VQADLAYAA). Over 45–76 (ERITHDYPKPTGTGKNKISTVSDYFRNIRTHS) the chain is Periplasmic. A beta stranded membrane pass occupies residues 77 to 85 (VHPRVSVGY). The Extracellular portion of the chain corresponds to 86–89 (DFGS). A beta stranded membrane pass occupies residues 90 to 96 (WRIAADY). The Periplasmic portion of the chain corresponds to 97–142 (ARYRKWNNNKYSVSIKELLRNDNSASGVRGHLNIQTQKTEHQENGT). Residues 143 to 157 (FHAVSSLGLSTIYDF) form a beta stranded membrane-spanning segment. The Extracellular segment spans residues 158–162 (DTGSR). The beta stranded transmembrane segment at 163–173 (FKPYIGMRVAY) threads the bilayer. Residues 174–221 (GHVRHQVRSVEQETEIITTYPSNGGGKVSLSSKMPPKSAHHQSNSIRR) lie on the Periplasmic side of the membrane. The disordered stretch occupies residues 194–217 (PSNGGGKVSLSSKMPPKSAHHQSN). Residues 222 to 234 (VGLGVIAGVGFDI) traverse the membrane as a beta stranded segment. The Extracellular segment spans residues 235–237 (TPN). The beta stranded transmembrane segment at 238-246 (LTLDTGYRY) threads the bilayer. Residues 247 to 261 (HNWGRLENTRFKTHE) are Periplasmic-facing. A beta stranded transmembrane segment spans residues 262–270 (ASLGMRYRF).

It belongs to the opacity porin family. In terms of assembly, homotrimer.

It is found in the cell outer membrane. This protein serves as a porin. The sequence is that of Outer membrane protein P.IIC (piiC) from Neisseria gonorrhoeae.